A 578-amino-acid chain; its full sequence is Probable cytochrome c oxidase subunit 1-alpha (578 aa).

The interval 1-21 (MSILNEPQGASAAEDSYENEL) is disordered. A helical transmembrane segment spans residues 44–64 (IGTMYLVTSFAFFVIGGVMAL). His90 contributes to the Fe(II)-heme a binding site. A run of 6 helical transmembrane segments spans residues 93 to 113 (IMLL…IMPL), 125 to 145 (LNMF…GGFL), 174 to 194 (LWIM…VNFI), 217 to 237 (VLLT…ALFA), 262 to 282 (LFWF…FGIV), and 294 to 314 (IFGY…SVTV). Residues His268 and Tyr272 each coordinate Cu cation. Residues 268–272 (HPEVY) constitute a cross-link (1'-histidyl-3'-tyrosine (His-Tyr)). Residues His317 and His318 each contribute to the Cu cation site. Helical transmembrane passes span 319 to 339 (MYVT…LIAV) and 363 to 383 (MLWS…GVIL). His401 is a heme a3 binding site. Transmembrane regions (helical) follow at residues 402 to 422 (FHYV…HFWW), 437 to 457 (ITFW…HWLG), and 480 to 500 (ISTI…YNIW). His403 serves as a coordination point for Fe(II)-heme a.

The protein belongs to the heme-copper respiratory oxidase family. In terms of assembly, associates with subunits II, III and IV to form cytochrome c oxidase. It depends on Cu(2+) as a cofactor. The cofactor is heme.

Its subcellular location is the cell membrane. It catalyses the reaction 4 Fe(II)-[cytochrome c] + O2 + 8 H(+)(in) = 4 Fe(III)-[cytochrome c] + 2 H2O + 4 H(+)(out). The protein operates within energy metabolism; oxidative phosphorylation. Cytochrome c oxidase is the component of the respiratory chain that catalyzes the reduction of oxygen to water. Subunits 1-3 form the functional core of the enzyme complex. CO I is the catalytic subunit of the enzyme. Electrons originating in cytochrome c are transferred via the copper A center of subunit 2 and heme A of subunit 1 to the bimetallic center formed by heme A3 and copper B. The polypeptide is Probable cytochrome c oxidase subunit 1-alpha (ctaD1) (Streptomyces coelicolor (strain ATCC BAA-471 / A3(2) / M145)).